The primary structure comprises 1181 residues: MAGARSRDPWGASGICYLFGSLLVELLFSRAVAFNLDVMGALRKEGEPGSLFGFSVALHRQLQPRPQSWLLVGAPQALALPGQQANRTGGLFACPLSLEETDCYRVDIDQGADMQKESKENQWLGVSVRSQGPGGKIVTCAHRYEARQRVDQILETRDMIGRCFVLSQDLAIRDELDGGEWKFCEGRPQGHEQFGFCQQGTAAAFSPDSHYLLFGAPGTYNWKGTARVELCAQGSADLAHLDDGPYEAGGEKEQDPRLIPVPANSYFGLLFVTNIDSSDPDQLVYKTLDPADRLPGPAGDLALNSYLGFSIDSGKGLVRAEELSFVAGAPRANHKGAVVILRKDSASRLVPEVMLSGERLTSGFGYSLAVADLNSDGWPDLIVGAPYFFERQEELGGAVYVYLNQGGHWAGISPLRLCGSPDSMFGISLAVLGDLNQDGFPDIAVGAPFDGDGKVFIYHGSSLGVVAKPSQVLEGEAVGIKSFGYSLSGSLDMDGNQYPDLLVGSLADTAVLFRARPILHVSHEVSIAPRSIDLEQPNCAGGHSVCVDLRVCFSYIAVPSSYSPTVALDYVLDADTDRRLRGQVPRVTFLSRNLEEPKHQASGTVWLKHQHDRVCGDAMFQLQENVKDKLRAIVVTLSYSLQTPRLRRQAPGQGLPPVAPILNAHQPSTQRAEIHFLKQGCGEDKICQSNLQLVRARFCTRVSDTEFQPLPMDVDGTTALFALSGQPVIGLELMVTNLPSDPAQPQADGDDAHEAQLLVMLPDSLHYSGVRALDPAEKPLCLSNENASHVECELGNPMKRGAQVTFYLILSTSGISIETTELEVELLLATISEQELHPVSARARVFIELPLSIAGMAIPQQLFFSGVVRGERAMQSERDVGSKVKYEVTVSNQGQSLRTLGSAFLNIMWPHEIANGKWLLYPMQVELEGGQGPGQKGLCSPRPNILHLDVDSRDRRRRELEPPEQQEPGERQEPSMSWWPVSSAEKKKNITLDCARGTANCVVFSCPLYSFDRAAVLHVWGRLWNSTFLEEYSAVKSLEVIVRANITVKSSIKNLMLRDASTVIPVMVYLDPMAVVAEGVPWWVILLAVLAGLLVLALLVLLLWKMGFFKRAKHPEATVPQYHAVKIPREDRQQFKEEKTGTILRNNWGSPRREGPDAHPILAADGHPELGPDGHPGPGTA.

Residues methionine 1–alanine 33 form the signal peptide. The Extracellular segment spans residues phenylalanine 34–tryptophan 1082. 7 FG-GAP repeats span residues asparagine 35–cysteine 103, glutamine 110–glutamate 175, glutamate 185–leucine 238, aspartate 292–leucine 349, valine 350–glycine 411, isoleucine 412–alanine 467, and glutamine 471–arginine 530. N-linked (GlcNAc...) asparagine glycosylation occurs at asparagine 86. Cystine bridges form between cysteine 94–cysteine 103, cysteine 140–cysteine 163, and cysteine 184–cysteine 197. 13 residues coordinate Ca(2+): aspartate 372, asparagine 374, aspartate 376, aspartate 380, aspartate 434, asparagine 436, aspartate 438, aspartate 442, aspartate 492, aspartate 494, asparagine 496, tyrosine 498, and aspartate 500. Disulfide bonds link cysteine 539/cysteine 546, cysteine 552/cysteine 615, cysteine 681/cysteine 687, cysteine 781/cysteine 792, cysteine 939/cysteine 994, and cysteine 1001/cysteine 1006. An N-linked (GlcNAc...) asparagine glycan is attached at asparagine 786. Basic and acidic residues predominate over residues valine 950 to glutamate 961. Residues valine 950–tryptophan 978 are disordered. A glycan (N-linked (GlcNAc...) asparagine) is linked at asparagine 989. Asparagine 1025 and asparagine 1045 each carry an N-linked (GlcNAc...) asparagine glycan. Residues tryptophan 1083–leucine 1103 traverse the membrane as a helical segment. Topologically, residues tryptophan 1104–alanine 1181 are cytoplasmic. Residues glycine 1107 to arginine 1111 carry the GFFKR motif motif. The interval glutamate 1138–alanine 1181 is disordered. Tandem repeats lie at residues aspartate 1157–proline 1160, aspartate 1165–proline 1168, and aspartate 1173–proline 1176. A 3 X 4 AA repeats of D-X-H-P region spans residues aspartate 1157–proline 1176.

Belongs to the integrin alpha chain family. As to quaternary structure, heterodimer of an alpha and a beta subunit. The alpha subunit is composed of a heavy and a light chain linked by a disulfide bond. Alpha-7 associates with beta-1. Interacts with COMP. Interacts (via C-terminus intracellular tail region) with CIB1; the interaction is stabilized/increased in a calcium- and magnesium-dependent manner. Post-translationally, ADP-ribosylated on at least two sites of the extracellular domain in skeletal myotubes. A 70 kDa form is created by proteolytic cleavage. Cleavage is elevated during myogenic differentiation and the cleaved form enhances cell adhesion and spreading on laminin. In terms of tissue distribution, isoforms containing segment A are predominantly expressed in skeletal muscle. Isoforms containing segment B are abundantly expressed in skeletal muscle, moderately in cardiac muscle, small intestine, colon, ovary and prostate and weakly in lung and testes. Isoforms containing segment X2D are expressed at low levels in fetal and adult skeletal muscle and in cardiac muscle, but are not detected in myoblasts and myotubes. In muscle fibers isoforms containing segment A and B are expressed at myotendinous and neuromuscular junctions; isoforms containing segment C are expressed at neuromuscular junctions and at extrasynaptic sites. Isoforms containing segments X1 or X2 or, at low levels, X1X2 are expressed in fetal and adult skeletal muscle (myoblasts and myotubes) and cardiac muscle.

The protein resides in the membrane. Integrin alpha-7/beta-1 is the primary laminin receptor on skeletal myoblasts and adult myofibers. During myogenic differentiation, it may induce changes in the shape and mobility of myoblasts, and facilitate their localization at laminin-rich sites of secondary fiber formation. It is involved in the maintenance of the myofibers cytoarchitecture as well as for their anchorage, viability and functional integrity. Isoform Alpha-7X2B and isoform Alpha-7X1B promote myoblast migration on laminin 1 and laminin 2/4, but isoform Alpha-7X1B is less active on laminin 1 (In vitro). Acts as a Schwann cell receptor for laminin-2. Acts as a receptor of COMP and mediates its effect on vascular smooth muscle cells (VSMCs) maturation. Required to promote contractile phenotype acquisition in differentiated airway smooth muscle (ASM) cells. In Homo sapiens (Human), this protein is Integrin alpha-7 (ITGA7).